The sequence spans 435 residues: Xylose isomerase (435 aa).

Residues aspartate 306 and aspartate 308 each contribute to the Mg(2+) site.

This sequence belongs to the xylose isomerase family. As to quaternary structure, homotetramer. It depends on Mg(2+) as a cofactor.

The protein localises to the cytoplasm. It carries out the reaction alpha-D-xylose = alpha-D-xylulofuranose. The protein is Xylose isomerase of Allorhizobium ampelinum (strain ATCC BAA-846 / DSM 112012 / S4) (Agrobacterium vitis (strain S4)).